A 121-amino-acid polypeptide reads, in one-letter code: Small ribosomal subunit protein uS13 (121 aa).

Positions 94 to 121 (SLPVRGQNTKNNSRTRKGPRRTVANKKK) are disordered. Positions 106-121 (SRTRKGPRRTVANKKK) are enriched in basic residues.

It belongs to the universal ribosomal protein uS13 family. As to quaternary structure, part of the 30S ribosomal subunit. Forms a loose heterodimer with protein S19. Forms two bridges to the 50S subunit in the 70S ribosome.

Functionally, located at the top of the head of the 30S subunit, it contacts several helices of the 16S rRNA. In the 70S ribosome it contacts the 23S rRNA (bridge B1a) and protein L5 of the 50S subunit (bridge B1b), connecting the 2 subunits; these bridges are implicated in subunit movement. Contacts the tRNAs in the A and P-sites. The polypeptide is Small ribosomal subunit protein uS13 (Exiguobacterium sp. (strain ATCC BAA-1283 / AT1b)).